The sequence spans 188 residues: Insulin-like peptide INSL6 (188 aa).

The N-terminal stretch at 1–22 (MKQLCCSCLLWLGLLLAPFSQE) is a signal peptide. 3 disulfides stabilise this stretch: Cys33-Cys169, Cys45-Cys182, and Cys168-Cys173. Positions 53–158 (FSMEEQSPMT…SGLFWGNHPQ (106 aa)) are cleaved as a propeptide — connecting peptide.

It belongs to the insulin family. As to expression, testis and prostate specific.

The protein localises to the secreted. Its function is as follows. May have a role in sperm development and fertilization. The chain is Insulin-like peptide INSL6 (Insl6) from Rattus norvegicus (Rat).